The chain runs to 353 residues: S-adenosylmethionine:tRNA ribosyltransferase-isomerase (353 aa).

This sequence belongs to the QueA family. Monomer.

The protein localises to the cytoplasm. The enzyme catalyses 7-aminomethyl-7-carbaguanosine(34) in tRNA + S-adenosyl-L-methionine = epoxyqueuosine(34) in tRNA + adenine + L-methionine + 2 H(+). It participates in tRNA modification; tRNA-queuosine biosynthesis. In terms of biological role, transfers and isomerizes the ribose moiety from AdoMet to the 7-aminomethyl group of 7-deazaguanine (preQ1-tRNA) to give epoxyqueuosine (oQ-tRNA). In Cupriavidus metallidurans (strain ATCC 43123 / DSM 2839 / NBRC 102507 / CH34) (Ralstonia metallidurans), this protein is S-adenosylmethionine:tRNA ribosyltransferase-isomerase.